The chain runs to 409 residues: Serine/threonine transporter SstT (409 aa).

A run of 9 helical transmembrane segments spans residues 15-35, 49-69, 82-102, 142-162, 193-213, 218-238, 301-321, 331-351, and 357-377; these read LSLV…ALLA, FVSA…MASI, PILV…VIAS, ALMN…GVAI, LGIF…ALLG, LAVL…LIVF, GAAI…GIAV, VVAA…LLLI, and LFGI…IIGV.

Belongs to the dicarboxylate/amino acid:cation symporter (DAACS) (TC 2.A.23) family.

It localises to the cell inner membrane. The catalysed reaction is L-serine(in) + Na(+)(in) = L-serine(out) + Na(+)(out). It catalyses the reaction L-threonine(in) + Na(+)(in) = L-threonine(out) + Na(+)(out). Functionally, involved in the import of serine and threonine into the cell, with the concomitant import of sodium (symport system). The chain is Serine/threonine transporter SstT from Pseudomonas fluorescens (strain ATCC BAA-477 / NRRL B-23932 / Pf-5).